Here is a 285-residue protein sequence, read N- to C-terminus: Shikimate dehydrogenase (NADP(+)) (285 aa).

Shikimate contacts are provided by residues 20–22 (SIS) and S67. The Proton acceptor role is filled by K71. NADP(+) is bound at residue E83. 2 residues coordinate shikimate: N92 and D107. NADP(+)-binding positions include 129–133 (GAGGA) and M227. Y229 is a binding site for shikimate. NADP(+) is bound at residue G250.

This sequence belongs to the shikimate dehydrogenase family. As to quaternary structure, homodimer.

It carries out the reaction shikimate + NADP(+) = 3-dehydroshikimate + NADPH + H(+). It functions in the pathway metabolic intermediate biosynthesis; chorismate biosynthesis; chorismate from D-erythrose 4-phosphate and phosphoenolpyruvate: step 4/7. Involved in the biosynthesis of the chorismate, which leads to the biosynthesis of aromatic amino acids. Catalyzes the reversible NADPH linked reduction of 3-dehydroshikimate (DHSA) to yield shikimate (SA). This Streptococcus gordonii (strain Challis / ATCC 35105 / BCRC 15272 / CH1 / DL1 / V288) protein is Shikimate dehydrogenase (NADP(+)).